The chain runs to 156 residues: Small ribosomal subunit protein uS7 (156 aa).

The protein belongs to the universal ribosomal protein uS7 family. As to quaternary structure, part of the 30S ribosomal subunit. Contacts proteins S9 and S11.

Its function is as follows. One of the primary rRNA binding proteins, it binds directly to 16S rRNA where it nucleates assembly of the head domain of the 30S subunit. Is located at the subunit interface close to the decoding center, probably blocks exit of the E-site tRNA. This is Small ribosomal subunit protein uS7 from Synechococcus sp. (strain JA-3-3Ab) (Cyanobacteria bacterium Yellowstone A-Prime).